Reading from the N-terminus, the 1380-residue chain is DNA-directed RNA polymerase subunit beta (1380 aa).

The protein belongs to the RNA polymerase beta chain family. The RNAP catalytic core consists of 2 alpha, 1 beta, 1 beta' and 1 omega subunit. When a sigma factor is associated with the core the holoenzyme is formed, which can initiate transcription.

The catalysed reaction is RNA(n) + a ribonucleoside 5'-triphosphate = RNA(n+1) + diphosphate. Functionally, DNA-dependent RNA polymerase catalyzes the transcription of DNA into RNA using the four ribonucleoside triphosphates as substrates. The protein is DNA-directed RNA polymerase subunit beta of Alcanivorax borkumensis (strain ATCC 700651 / DSM 11573 / NCIMB 13689 / SK2).